The chain runs to 216 residues: Ribosomal RNA small subunit methyltransferase G (216 aa).

S-adenosyl-L-methionine contacts are provided by residues Gly73, Leu78, 124–125 (AE), and Arg139.

It belongs to the methyltransferase superfamily. RNA methyltransferase RsmG family.

The protein resides in the cytoplasm. Its function is as follows. Specifically methylates the N7 position of guanine in position 518 of 16S rRNA. This is Ribosomal RNA small subunit methyltransferase G from Arthrobacter sp. (strain FB24).